An 860-amino-acid chain; its full sequence is M-phase phosphoprotein 8 (860 aa).

Methionine 1 is modified (N-acetylmethionine). 4 positions are modified to phosphoserine: serine 51, serine 85, serine 136, and serine 138. The Chromo domain maps to phenylalanine 59–valine 118. The segment at tryptophan 80–aspartate 87 is histone H3K9me3 binding. The span at asparagine 129 to glutamine 141 shows a compositional bias: polar residues. The segment at asparagine 129–glutamate 191 is disordered. Threonine 144 carries the post-translational modification Phosphothreonine. Phosphoserine; by CDK1 occurs at positions 149 and 164. Composition is skewed to basic and acidic residues over residues glutamine 159–lysine 169 and lysine 177–leucine 186. 3 positions are modified to phosphoserine: serine 188, serine 189, and serine 192. Residues alanine 206–asparagine 249 are compositionally biased toward basic and acidic residues. The disordered stretch occupies residues alanine 206 to threonine 440. Low complexity predominate over residues glutamate 259–valine 268. Residues serine 266, serine 272, and serine 279 each carry the phosphoserine modification. The span at glutamate 280 to leucine 314 shows a compositional bias: basic and acidic residues. The residue at position 319 (serine 319) is a Phosphoserine. At threonine 334 the chain carries Phosphothreonine; by CDK1. A compositionally biased stretch (basic and acidic residues) spans arginine 336–lysine 377. The residue at position 385 (threonine 385) is a Phosphothreonine; by CDK1. Serine 392, serine 400, and serine 403 each carry phosphoserine. A compositionally biased stretch (basic and acidic residues) spans lysine 408 to threonine 440. An interaction with humanin region spans residues glycine 431–alanine 560. Threonine 454 bears the Phosphothreonine mark. Positions lysine 458–threonine 496 are disordered. ANK repeat units follow at residues serine 600 to glycine 629, asparagine 633 to valine 662, asparagine 666 to isoleucine 695, and histidine 699 to arginine 728.

Homodimer. Interacts (via chromo domain) with histone H3K9me3. Has the highest affinity for H3K9me3, and lesser affinity for H3K9me2 and H3K9me1. Component of the HUSH complex; at least composed of TASOR, PPHLN1 and MPHOSPH8. Interacts with DNMT3, EHMT1 and SETDB1. Interacts with MORC2; the interaction associateS MORC2 with the HUSH complex which recruits MORC2 to heterochromatic loci. Interacts with ZNF638; leading to recruitment of the HUSH complex to unintegrated retroviral DNA. Interacts with TASOR. Interacts with humanin. Post-translationally, phosphorylated in M (mitotic) phase. Phosphorylation by CDK1 promotes dissociation from chromatin.

It is found in the nucleus. It localises to the chromosome. Functionally, heterochromatin component that specifically recognizes and binds methylated 'Lys-9' of histone H3 (H3K9me) and promotes recruitment of proteins that mediate epigenetic repression. Mediates recruitment of the HUSH complex to H3K9me3 sites: the HUSH complex is recruited to genomic loci rich in H3K9me3 and is required to maintain transcriptional silencing by promoting recruitment of SETDB1, a histone methyltransferase that mediates further deposition of H3K9me3, as well as MORC2. Binds H3K9me and promotes DNA methylation by recruiting DNMT3A to target CpG sites; these can be situated within the coding region of the gene. Mediates down-regulation of CDH1 expression. Also represses L1 retrotransposons in collaboration with MORC2 and, probably, SETDB1, the silencing is dependent of repressive epigenetic modifications, such as H3K9me3 mark. Silencing events often occur within introns of transcriptionally active genes, and lead to the down-regulation of host gene expression. The HUSH complex is also involved in the silencing of unintegrated retroviral DNA by being recruited by ZNF638: some part of the retroviral DNA formed immediately after infection remains unintegrated in the host genome and is transcriptionally repressed. The polypeptide is M-phase phosphoprotein 8 (Homo sapiens (Human)).